We begin with the raw amino-acid sequence, 212 residues long: Dephospho-CoA kinase (212 aa).

Residues 4–204 (IVALTGGICS…RDYLKAEKTT (201 aa)) form the DPCK domain. ATP is bound at residue 12-17 (CSGKSV).

Belongs to the CoaE family.

The protein resides in the cytoplasm. The enzyme catalyses 3'-dephospho-CoA + ATP = ADP + CoA + H(+). It functions in the pathway cofactor biosynthesis; coenzyme A biosynthesis; CoA from (R)-pantothenate: step 5/5. Its function is as follows. Catalyzes the phosphorylation of the 3'-hydroxyl group of dephosphocoenzyme A to form coenzyme A. This Blochmanniella pennsylvanica (strain BPEN) protein is Dephospho-CoA kinase.